Reading from the N-terminus, the 257-residue chain is Metallo-beta-lactamase type 2 (257 aa).

The signal sequence occupies residues 1–30 (MKKNTLLKVGLCVSLLGTTQFVSTISSVQA). Residues H116, H118, D120, H179, and C198 each contribute to the Zn(2+) site. Substrate is bound by residues K201 and N210. H240 contacts Zn(2+).

The protein belongs to the metallo-beta-lactamase superfamily. Class-B beta-lactamase family. As to quaternary structure, monomer. Zn(2+) serves as cofactor.

It localises to the periplasm. The enzyme catalyses a beta-lactam + H2O = a substituted beta-amino acid. In terms of biological role, confers resistance to the different beta-lactams antibiotics (penicillin, cephalosporin and carbapenem) via the hydrolysis of the beta-lactam ring. This chain is Metallo-beta-lactamase type 2, found in Bacillus sp. (strain 170).